We begin with the raw amino-acid sequence, 201 residues long: Prostamide/prostaglandin F synthase (201 aa).

Tyrosine 108 carries the phosphotyrosine modification.

Belongs to the peroxiredoxin-like PRXL2 family. Prostamide/prostaglandin F synthase subfamily.

The protein resides in the cytoplasm. It is found in the cytosol. It catalyses the reaction prostaglandin H2 + [thioredoxin]-dithiol = prostaglandin F2alpha + [thioredoxin]-disulfide. The enzyme catalyses prostamide F2alpha + [thioredoxin]-disulfide = prostamide H2 + [thioredoxin]-dithiol. Its function is as follows. Catalyzes the reduction of prostaglandin-ethanolamide H(2) (prostamide H(2)) to prostamide F(2alpha) with NADPH as proton donor. Also able to reduce prostaglandin H(2) to prostaglandin F(2alpha). The chain is Prostamide/prostaglandin F synthase (PRXL2B) from Bos taurus (Bovine).